We begin with the raw amino-acid sequence, 307 residues long: Ribosomal RNA small subunit methyltransferase H (307 aa).

Residues 31 to 33 (GGH), Asp51, Tyr83, Asp97, and Gln104 each bind S-adenosyl-L-methionine.

This sequence belongs to the methyltransferase superfamily. RsmH family.

It is found in the cytoplasm. It carries out the reaction cytidine(1402) in 16S rRNA + S-adenosyl-L-methionine = N(4)-methylcytidine(1402) in 16S rRNA + S-adenosyl-L-homocysteine + H(+). Its function is as follows. Specifically methylates the N4 position of cytidine in position 1402 (C1402) of 16S rRNA. The protein is Ribosomal RNA small subunit methyltransferase H of Buchnera aphidicola subsp. Cinara cedri (strain Cc).